Here is a 259-residue protein sequence, read N- to C-terminus: Putative carbamate hydrolase RutD (259 aa).

Belongs to the AB hydrolase superfamily. Hydrolase RutD family.

It catalyses the reaction carbamate + 2 H(+) = NH4(+) + CO2. Functionally, involved in pyrimidine catabolism. May facilitate the hydrolysis of carbamate, a reaction that can also occur spontaneously. This Pseudomonas savastanoi pv. phaseolicola (strain 1448A / Race 6) (Pseudomonas syringae pv. phaseolicola (strain 1448A / Race 6)) protein is Putative carbamate hydrolase RutD.